A 25-amino-acid polypeptide reads, in one-letter code: Ocellatin-K1 (25 aa).

Ile25 is modified (isoleucine amide).

As to expression, expressed by the skin glands.

The protein resides in the secreted. Has hemolytic and antibacterial activity. This is Ocellatin-K1 from Leptodactylus knudseni (Knudsen's thin-toed frog).